The following is a 210-amino-acid chain: Outer-membrane lipoprotein LolB (210 aa).

The first 18 residues, 1-18 (MKKFTKILSLSTLLFLAG), serve as a signal peptide directing secretion. Cys-19 is lipidated: N-palmitoyl cysteine. The S-diacylglycerol cysteine moiety is linked to residue Cys-19.

Belongs to the LolB family. In terms of assembly, monomer.

Its subcellular location is the cell outer membrane. Functionally, plays a critical role in the incorporation of lipoproteins in the outer membrane after they are released by the LolA protein. This Actinobacillus pleuropneumoniae serotype 7 (strain AP76) protein is Outer-membrane lipoprotein LolB.